Here is a 229-residue protein sequence, read N- to C-terminus: Non-structural protein P8 (229 aa).

Transmembrane regions (helical) follow at residues 119 to 139 (IIHMTLLIAAVVALLTSVCTL) and 162 to 182 (SLNPMLGVVNLGATFLMMVCA).

This sequence belongs to the orbivirus NS3 family. Forms homooligomers via coiled-coil motif. Interacts with host OPTN; this interaction inhibits innate immune response.

The protein resides in the host cell membrane. Its subcellular location is the host Golgi apparatus. Its function is as follows. Plays a role in the inhibition of host innate immune response. Interacts with host OPTN and thus inhibits the recruitment of TBK1 to the host Golgi apparatus. In turn, downstream partner IRF3 cannot be activated and IFN-beta production is impaired. In terms of biological role, facilitates viral particle release either by increasing plasma membrane permeability through a viroporin-like activity or by viral budding. The protein is Non-structural protein P8 (Segment-10) of Antilocapra americana (Pronghorn).